Here is a 684-residue protein sequence, read N- to C-terminus: Hydroxyproline O-galactosyltransferase GALT2 (684 aa).

At 1–22 (MKRVKSESFRGVYSSRRFKLSH) the chain is on the cytoplasmic side. The helical; Signal-anchor for type II membrane protein transmembrane segment at 23–43 (FLLAIAGFYLVFLAFKFPHFI) threads the bilayer. At 44 to 684 (EMVAMLSGDT…KGRPQCCNFR (641 aa)) the chain is on the lumenal side. The segment at 80–102 (KLEDEDHQSGPSTTQKVSPEEKI) is disordered. Residues Asn103, Asn127, and Asn162 are each glycosylated (N-linked (GlcNAc...) asparagine). The Galectin domain occupies 191–405 (RIMLLPCGLA…DVDIHSIHAT (215 aa)). Residues Asn524 and Asn632 are each glycosylated (N-linked (GlcNAc...) asparagine).

This sequence belongs to the glycosyltransferase 31 family. Mn(2+) is required as a cofactor. Expressed in stems and at lower levels in cauline leaves and siliques.

The protein localises to the golgi apparatus membrane. It functions in the pathway protein modification; protein glycosylation. In terms of biological role, possesses hydroxyproline O-galactosyltransferase activity. Transfers galactose from UDP-galactose to hydroxyproline residues in the arabinogalactan proteins (AGPs). Is specific for AGPs containing non-contiguous peptidyl hydroxyproline residues. Utilizes UDP-galactose solely as sugar donor. The addition of galactose onto the peptidyl hydroxyproline residues in AGP core proteins represents the first committed step in arabinogalactan polysaccharide addition. AGP glycans play essential roles in both vegetative and reproductive plant growth. The protein is Hydroxyproline O-galactosyltransferase GALT2 of Arabidopsis thaliana (Mouse-ear cress).